A 180-amino-acid polypeptide reads, in one-letter code: Adenine phosphoribosyltransferase (180 aa).

The protein belongs to the purine/pyrimidine phosphoribosyltransferase family. As to quaternary structure, homodimer.

The protein localises to the cytoplasm. It catalyses the reaction AMP + diphosphate = 5-phospho-alpha-D-ribose 1-diphosphate + adenine. The protein operates within purine metabolism; AMP biosynthesis via salvage pathway; AMP from adenine: step 1/1. Its function is as follows. Catalyzes a salvage reaction resulting in the formation of AMP, that is energically less costly than de novo synthesis. The polypeptide is Adenine phosphoribosyltransferase (Actinobacillus succinogenes (strain ATCC 55618 / DSM 22257 / CCUG 43843 / 130Z)).